A 430-amino-acid polypeptide reads, in one-letter code: Tol-Pal system protein TolB (430 aa).

The first 21 residues, 1-21, serve as a signal peptide directing secretion; sequence MKQAFRVALSVLMLFVAVAHA.

This sequence belongs to the TolB family. The Tol-Pal system is composed of five core proteins: the inner membrane proteins TolA, TolQ and TolR, the periplasmic protein TolB and the outer membrane protein Pal. They form a network linking the inner and outer membranes and the peptidoglycan layer.

It is found in the periplasm. In terms of biological role, part of the Tol-Pal system, which plays a role in outer membrane invagination during cell division and is important for maintaining outer membrane integrity. TolB occupies a key intermediary position in the Tol-Pal system because it communicates directly with both membrane-embedded components, Pal in the outer membrane and TolA in the inner membrane. The polypeptide is Tol-Pal system protein TolB (Erwinia tasmaniensis (strain DSM 17950 / CFBP 7177 / CIP 109463 / NCPPB 4357 / Et1/99)).